Consider the following 383-residue polypeptide: Probable cytosolic iron-sulfur protein assembly protein 1 (383 aa).

7 WD repeats span residues 10–49 (AHND…KFPL), 56–108 (THKR…VEYD), 135–175 (GHEN…EEFE), 182–221 (DHSQ…DEWS), 228–275 (GHEG…EDDE), 302–341 (VHKY…KWVI), and 349–383 (HGVH…LWKI).

The protein belongs to the WD repeat CIA1 family. In terms of assembly, interacts with NAR1.

Its subcellular location is the cytoplasm. It localises to the nucleus. Essential component of the cytosolic iron-sulfur (Fe/S) protein assembly machinery. Required for the maturation of extramitochondrial Fe/S proteins. This chain is Probable cytosolic iron-sulfur protein assembly protein 1, found in Candida albicans (strain SC5314 / ATCC MYA-2876) (Yeast).